The chain runs to 206 residues: Ribosomal RNA large subunit methyltransferase E (206 aa).

5 residues coordinate S-adenosyl-L-methionine: G60, W62, D80, D96, and D121. The active-site Proton acceptor is K161.

The protein belongs to the class I-like SAM-binding methyltransferase superfamily. RNA methyltransferase RlmE family.

It localises to the cytoplasm. The catalysed reaction is uridine(2552) in 23S rRNA + S-adenosyl-L-methionine = 2'-O-methyluridine(2552) in 23S rRNA + S-adenosyl-L-homocysteine + H(+). In terms of biological role, specifically methylates the uridine in position 2552 of 23S rRNA at the 2'-O position of the ribose in the fully assembled 50S ribosomal subunit. The chain is Ribosomal RNA large subunit methyltransferase E from Stutzerimonas stutzeri (strain A1501) (Pseudomonas stutzeri).